A 375-amino-acid chain; its full sequence is Carbamoyl phosphate synthase small chain (375 aa).

The segment at 1–184 (MVSLYLENGL…LDYKPFDEKI (184 aa)) is CPSase. The L-glutamine site is built by serine 44, glycine 240, and glycine 242. The region spanning 188 to 375 (IIAVLDFGAK…KEFVGLLEGF (188 aa)) is the Glutamine amidotransferase type-1 domain. Cysteine 268 acts as the Nucleophile in catalysis. 4 residues coordinate L-glutamine: leucine 269, glutamine 272, asparagine 310, and tyrosine 313. Residues histidine 351 and glutamate 353 contribute to the active site.

This sequence belongs to the CarA family. Composed of two chains; the small (or glutamine) chain promotes the hydrolysis of glutamine to ammonia, which is used by the large (or ammonia) chain to synthesize carbamoyl phosphate. Tetramer of heterodimers (alpha,beta)4.

The catalysed reaction is hydrogencarbonate + L-glutamine + 2 ATP + H2O = carbamoyl phosphate + L-glutamate + 2 ADP + phosphate + 2 H(+). The enzyme catalyses L-glutamine + H2O = L-glutamate + NH4(+). Its pathway is amino-acid biosynthesis; L-arginine biosynthesis; carbamoyl phosphate from bicarbonate: step 1/1. The protein operates within pyrimidine metabolism; UMP biosynthesis via de novo pathway; (S)-dihydroorotate from bicarbonate: step 1/3. Its function is as follows. Small subunit of the glutamine-dependent carbamoyl phosphate synthetase (CPSase). CPSase catalyzes the formation of carbamoyl phosphate from the ammonia moiety of glutamine, carbonate, and phosphate donated by ATP, constituting the first step of 2 biosynthetic pathways, one leading to arginine and/or urea and the other to pyrimidine nucleotides. The small subunit (glutamine amidotransferase) binds and cleaves glutamine to supply the large subunit with the substrate ammonia. In Helicobacter pylori (strain J99 / ATCC 700824) (Campylobacter pylori J99), this protein is Carbamoyl phosphate synthase small chain.